The chain runs to 313 residues: Lactamase-like protein nscB (313 aa).

His-97, His-99, Asp-101, and His-102 together coordinate Zn(2+). Asp-101 (proton donor/acceptor) is an active-site residue.

The protein belongs to the metallo-beta-lactamase superfamily. It depends on Zn(2+) as a cofactor.

It functions in the pathway secondary metabolite biosynthesis. Lactamase-like protein; part of the gene cluster that mediates the biosynthesis of neosartoricin B, a prenylated anthracenone that probably exhibits T-cell antiproliferative activity, suggestive of a physiological role as an immunosuppressive agent. The non-reducing polyketide synthase nscA probably synthesizes and cyclizes the decaketide backbone. The hydrolase nscB then mediates the product release through hydrolysis followed by spontaneous decarboxylation. The prenyltransferase nscD catalyzes the addition of the dimethylallyl group to the aromatic C5. The FAD-dependent monooxygenase nscC is then responsible for the stereospecific hydroxylation at C2. Neosartoricin B can be converted into two additional compounds neosartoricins C and D. Neosartoricin C is a spirocyclic compound that is cyclized through the attack of C3 hydroxyl on C14, followed by dehydration. On the other hand, neosartoricin D is a further cyclized compound in which attack of C2 on C14 in neosartoricin C results in the formation of the acetal-containing dioxabicyclo-octanone ring. Both of these compounds are novel and possibly represent related metabolites of the gene cluster. The sequence is that of Lactamase-like protein nscB from Arthroderma gypseum (strain ATCC MYA-4604 / CBS 118893) (Microsporum gypseum).